The following is a 419-amino-acid chain: Probable serine/threonine-protein kinase CST (419 aa).

Glycine 2 carries the N-myristoyl glycine lipid modification. Residue cysteine 4 is the site of S-palmitoyl cysteine attachment. Residues 8–48 (FSSSSPSKTGLHSHATTNNHSNGTEFSSTTGATTNSSVGQQ) form a disordered region. The span at 15 to 48 (KTGLHSHATTNNHSNGTEFSSTTGATTNSSVGQQ) shows a compositional bias: polar residues. A Protein kinase domain is found at 86 to 368 (FKPDSMLGQG…KEVVEVLEHI (283 aa)). 92–100 (LGQGGFGKV) is a binding site for ATP. The residue at position 117 (serine 117) is a Phosphoserine. An ATP-binding site is contributed by lysine 124. Tyrosine 169 is subject to Phosphotyrosine. The active-site Proton acceptor is aspartate 218. Serine 222 carries the post-translational modification Phosphoserine. A phosphothreonine mark is found at threonine 253 and threonine 258. Phosphotyrosine is present on tyrosine 266. Over residues 378-390 (SSTKQAVANSSRS) the composition is skewed to polar residues. The segment at 378 to 419 (SSTKQAVANSSRSSPHHYRYKAGALGAERKRATPGRFGSVEK) is disordered.

The protein belongs to the protein kinase superfamily. Ser/Thr protein kinase family. Interacts with SOBIR1/EVR and RLK5/HAE. Autophosphorylated on serine, threonine and tyrosine residues.

The protein resides in the cell membrane. The protein localises to the nucleus. The catalysed reaction is L-seryl-[protein] + ATP = O-phospho-L-seryl-[protein] + ADP + H(+). It carries out the reaction L-threonyl-[protein] + ATP = O-phospho-L-threonyl-[protein] + ADP + H(+). In terms of biological role, acts as a spatial inhibitor of signaling that modulates abscission zone cell adhesion and expansion. Acts both directly and indirectly by physically interacting with RLK5/HAE and SOBIR1/EVR at the cell surface. This is Probable serine/threonine-protein kinase CST from Arabidopsis thaliana (Mouse-ear cress).